We begin with the raw amino-acid sequence, 263 residues long: 4-hydroxy-2-oxo-heptane-1,7-dioate aldolase (263 aa).

The active-site Proton acceptor is H45. Q147 contacts substrate. An a divalent metal cation-binding site is contributed by E149. Positions 174 and 175 each coordinate substrate. Residue D175 participates in a divalent metal cation binding.

It belongs to the HpcH/HpaI aldolase family. Homohexamer; trimer of dimers. The cofactor is a divalent metal cation.

It catalyses the reaction 4-hydroxy-2-oxoheptanedioate = succinate semialdehyde + pyruvate. Its pathway is aromatic compound metabolism; 4-hydroxyphenylacetate degradation; pyruvate and succinate semialdehyde from 4-hydroxyphenylacetate: step 7/7. In terms of biological role, catalyzes the reversible retro-aldol cleavage of 4-hydroxy-2-ketoheptane-1,7-dioate (HKHD) to pyruvate and succinic semialdehyde. The polypeptide is 4-hydroxy-2-oxo-heptane-1,7-dioate aldolase (Salmonella heidelberg (strain SL476)).